The following is a 189-amino-acid chain: MTEYKLVVVGAGGVGKSALTIQLIQNHFVDEYDPTIEDSYRKQVVIDGETCLLDILDTAGQEEYSAMRDQYMRTGEGLLCVFAINNSKSFADINLYREQIKRVKDSDDVPMVLVGNKCDLPTRTVDTKQAHELAKSYGIPFIETSAKTRQGVEDAFYTLVREIRQYRMKKLNSSDDGTQGCMGLPCVVM.

GTP is bound by residues 10–18 (GAGGVGKSA) and 29–30 (VD). Residues 32–40 (YDPTIEDSY) carry the Effector region motif. 57–61 (DTAGQ) is a GTP binding site. Serine 89 bears the Phosphoserine mark. 116 to 119 (NKCD) is a binding site for GTP. The hypervariable region stretch occupies residues 166–185 (YRMKKLNSSDDGTQGCMGLP). Residue lysine 170 forms a Glycyl lysine isopeptide (Lys-Gly) (interchain with G-Cter in ubiquitin) linkage. Residue cysteine 181 is the site of S-palmitoyl cysteine attachment. Cysteine 186 carries S-farnesyl cysteine lipidation. The propeptide at 187-189 (VVM) is removed in mature form.

This sequence belongs to the small GTPase superfamily. Ras family. In terms of assembly, interacts (active GTP-bound form preferentially) with RGS14. Interacts (active GTP-bound form) with RASSF7. Interacts (active GTP-bound form) with both SHOC2 and PP1c (all isoforms) to form a tertiary complex; SHOC2 and PP1c preferably bind M-Ras/MRAS, but they also bind K-Ras/KRAS, N-Ras/NRAS and H-Ras/HRAS. Palmitoylated by the ZDHHC9-GOLGA7 complex. Depalmitoylated by ABHD17A, ABHD17B and ABHD17C. A continuous cycle of de- and re-palmitoylation regulates rapid exchange between plasma membrane and Golgi. In terms of processing, acetylation at Lys-104 prevents interaction with guanine nucleotide exchange factors (GEFs). Post-translationally, ubiquitinated by the BCR(LZTR1) E3 ubiquitin ligase complex at Lys-170 in a non-degradative manner, leading to inhibit Ras signaling by decreasing Ras association with membranes. Phosphorylation at Ser-89 enhances NRAS association with its downstream effectors.

The protein resides in the cell membrane. It localises to the golgi apparatus membrane. It carries out the reaction GTP + H2O = GDP + phosphate + H(+). Its activity is regulated as follows. Alternates between an inactive form bound to GDP and an active form bound to GTP. Activated by a guanine nucleotide-exchange factor (GEF) and inactivated by a GTPase-activating protein (GAP). Ras proteins bind GDP/GTP and possess intrinsic GTPase activity. This chain is GTPase NRas (NRAS), found in Pongo abelii (Sumatran orangutan).